The sequence spans 322 residues: Methionyl-tRNA formyltransferase (322 aa).

Serine 113 to proline 116 lines the (6S)-5,6,7,8-tetrahydrofolate pocket.

The protein belongs to the Fmt family.

The catalysed reaction is L-methionyl-tRNA(fMet) + (6R)-10-formyltetrahydrofolate = N-formyl-L-methionyl-tRNA(fMet) + (6S)-5,6,7,8-tetrahydrofolate + H(+). Its function is as follows. Attaches a formyl group to the free amino group of methionyl-tRNA(fMet). The formyl group appears to play a dual role in the initiator identity of N-formylmethionyl-tRNA by promoting its recognition by IF2 and preventing the misappropriation of this tRNA by the elongation apparatus. This chain is Methionyl-tRNA formyltransferase, found in Bacteroides thetaiotaomicron (strain ATCC 29148 / DSM 2079 / JCM 5827 / CCUG 10774 / NCTC 10582 / VPI-5482 / E50).